The following is a 128-amino-acid chain: Phosphoribosyl-AMP cyclohydrolase (128 aa).

A Mg(2+)-binding site is contributed by Asp-94. Cys-95 contributes to the Zn(2+) binding site. Residues Asp-96 and Asp-98 each contribute to the Mg(2+) site. The Zn(2+) site is built by Cys-111 and Cys-118.

It belongs to the PRA-CH family. In terms of assembly, homodimer. It depends on Mg(2+) as a cofactor. Zn(2+) serves as cofactor.

It localises to the cytoplasm. It carries out the reaction 1-(5-phospho-beta-D-ribosyl)-5'-AMP + H2O = 1-(5-phospho-beta-D-ribosyl)-5-[(5-phospho-beta-D-ribosylamino)methylideneamino]imidazole-4-carboxamide. It functions in the pathway amino-acid biosynthesis; L-histidine biosynthesis; L-histidine from 5-phospho-alpha-D-ribose 1-diphosphate: step 3/9. Its function is as follows. Catalyzes the hydrolysis of the adenine ring of phosphoribosyl-AMP. The chain is Phosphoribosyl-AMP cyclohydrolase from Streptomyces coelicolor (strain ATCC BAA-471 / A3(2) / M145).